Consider the following 383-residue polypeptide: Lipoyl synthase, mitochondrial (383 aa).

Residues 1 to 19 (MHASTLTRCMRVAQNARCL) constitute a mitochondrion transit peptide. Residues 69–97 (DAAPGTKPSRKPNASNRKPKWLKAQPTQG) form a disordered region. Positions 116, 121, 127, 147, 151, 154, and 362 each coordinate [4Fe-4S] cluster. The region spanning 132 to 351 (KDGIATATIM…QKVAEQMGFL (220 aa)) is the Radical SAM core domain.

It belongs to the radical SAM superfamily. Lipoyl synthase family. Requires [4Fe-4S] cluster as cofactor.

It is found in the mitochondrion. It catalyses the reaction [[Fe-S] cluster scaffold protein carrying a second [4Fe-4S](2+) cluster] + N(6)-octanoyl-L-lysyl-[protein] + 2 oxidized [2Fe-2S]-[ferredoxin] + 2 S-adenosyl-L-methionine + 4 H(+) = [[Fe-S] cluster scaffold protein] + N(6)-[(R)-dihydrolipoyl]-L-lysyl-[protein] + 4 Fe(3+) + 2 hydrogen sulfide + 2 5'-deoxyadenosine + 2 L-methionine + 2 reduced [2Fe-2S]-[ferredoxin]. It functions in the pathway protein modification; protein lipoylation via endogenous pathway; protein N(6)-(lipoyl)lysine from octanoyl-[acyl-carrier-protein]: step 2/2. Functionally, catalyzes the radical-mediated insertion of two sulfur atoms into the C-6 and C-8 positions of the octanoyl moiety bound to the lipoyl domains of lipoate-dependent enzymes, thereby converting the octanoylated domains into lipoylated derivatives. The sequence is that of Lipoyl synthase, mitochondrial from Phytophthora infestans (strain T30-4) (Potato late blight agent).